The following is a 233-amino-acid chain: Large ribosomal subunit protein uL1 (233 aa).

This sequence belongs to the universal ribosomal protein uL1 family. In terms of assembly, part of the 50S ribosomal subunit.

Its function is as follows. Binds directly to 23S rRNA. The L1 stalk is quite mobile in the ribosome, and is involved in E site tRNA release. In terms of biological role, protein L1 is also a translational repressor protein, it controls the translation of the L11 operon by binding to its mRNA. This is Large ribosomal subunit protein uL1 from Geobacillus kaustophilus (strain HTA426).